The following is a 247-amino-acid chain: Probable transcriptional regulatory protein Dvul_0986 (247 aa).

Residues 1-22 (MAGHSKWANIQHRKGRQDAKRG) are disordered.

The protein belongs to the TACO1 family.

The protein resides in the cytoplasm. The chain is Probable transcriptional regulatory protein Dvul_0986 from Nitratidesulfovibrio vulgaris (strain DP4) (Desulfovibrio vulgaris).